The primary structure comprises 289 residues: Ribosomal protein L11 methyltransferase (289 aa).

S-adenosyl-L-methionine-binding residues include Thr134, Gly155, Asp177, and Asn225.

The protein belongs to the methyltransferase superfamily. PrmA family.

The protein localises to the cytoplasm. It catalyses the reaction L-lysyl-[protein] + 3 S-adenosyl-L-methionine = N(6),N(6),N(6)-trimethyl-L-lysyl-[protein] + 3 S-adenosyl-L-homocysteine + 3 H(+). Functionally, methylates ribosomal protein L11. This Parasynechococcus marenigrum (strain WH8102) protein is Ribosomal protein L11 methyltransferase.